The sequence spans 30 residues: Cyclotide mela-5 (30 aa).

Positions 1-30 (GSAIACGESCFKFKCYTPGCSCSYPICKKD) form a cross-link, cyclopeptide (Gly-Asp). Disulfide bonds link Cys-6/Cys-20, Cys-10/Cys-22, and Cys-15/Cys-27.

In terms of processing, this is a cyclic peptide. Post-translationally, contains 3 disulfide bonds.

Probably participates in a plant defense mechanism (Potential). Binds to and induces leakage in phospholipd membranes, particularly ones containing 1-palmitoyl-2-oleophosphatidylethanolamine (POPE). The polypeptide is Cyclotide mela-5 (Melicytus latifolius (Norfolk Island mahoe)).